The primary structure comprises 454 residues: Aquaporin-7 (454 aa).

Residues 1 to 71 (MNINEPRDGG…LHLHNKTRNH (71 aa)) lie on the Cytoplasmic side of the membrane. Residues 72–92 (FVATVAEFAGTTLFLFFAFSG) form a helical membrane-spanning segment. Residues 93–115 (TQVALLATPANDSNVVGTPSNPA) lie on the Extracellular side of the membrane. An N-linked (GlcNAc...) asparagine glycan is attached at Asn103. Residues 116 to 136 (QLLYVSLCFGFSLAVNAWVFF) traverse the membrane as a helical segment. The Cytoplasmic segment spans residues 137 to 163 (RISGGLFNPAVTMGMCIVGALPYFRGL). Residues 144 to 146 (NPA) carry the NPA 1 motif. A helical membrane pass occupies residues 164-184 (LLIFAQIIGGIAAAAIVSALF). Residues 185–202 (PGPITFRTSLGGGTSIVQ) lie on the Extracellular side of the membrane. Residues 203–223 (GLFIEMFLTAELVFTIFMLAA) form a helical membrane-spanning segment. Topologically, residues 224 to 229 (EKHKGT) are cytoplasmic. A helical membrane pass occupies residues 230–250 (FIAPIGIGLSLFIAELTGVYF). Topologically, residues 251–274 (TGGSVNPARSFGPSVVSGQFTGYH) are extracellular. The NPA 2 motif lies at 256-258 (NPA). Residues 275–295 (WIYWVGPILGAILASAFYKFI) form a helical membrane-spanning segment. The Cytoplasmic segment spans residues 296–454 (KMLEYETANP…ENLRDNTHNN (159 aa)). The tract at residues 343–454 (GASHVHENGN…ENLRDNTHNN (112 aa)) is disordered.

The protein belongs to the MIP/aquaporin (TC 1.A.8) family.

Its subcellular location is the membrane. It catalyses the reaction H2O(in) = H2O(out). Its function is as follows. Water channel required to facilitate the transport of water across membranes. Involved in conidiation. This Botryotinia fuckeliana (strain B05.10) (Noble rot fungus) protein is Aquaporin-7.